The sequence spans 543 residues: Sodium/glucose cotransporter (543 aa).

Transmembrane regions (helical) follow at residues 10–30, 45–65, 79–99, 129–149, 156–176, 193–213, 246–266, 287–307, 345–365, 401–421, 427–447, 455–475, 483–503, and 523–543; these read FIDIMVFAIYVAIIIGVGLWV, FLAGKSLPWWAVGASLIAANI, SIGLAIASYEWMSAITLIIVG, ILAVFWISLYIFVNLTSVLYL, TILGIPLMYSILGLALFALVY, VFFLVLGGFMTTYMAVSFIGG, LPGIAVLIGGLWVANLYYWGF, IVFAAFLKLIVPFLVVLPGIA, FLPVGVKGVVFAALAAAIVSS, TAAVVALIIACLIAPMLGGIG, IQEYTGLVSPGILAVFLLGLF, GAIIGVVASIPFALFLKFMPL, MLYTLLFTMVVIAFTSLSTSI, and SFNIAAYGIMIVLAVLYTLFW.

The protein localises to the cell membrane. Functionally, actively transports glucose into cells by Na(+) cotransport. The polypeptide is Sodium/glucose cotransporter (sglT) (Vibrio parahaemolyticus).